A 529-amino-acid polypeptide reads, in one-letter code: MANQDFLNEINKRRTFAIISHPDAGKTTITEKVLLFGQAIQRAGTVKGRGSNQHAKSDWMEMEKQRGISITTSVMQFPYADCLVNLLDTPGHEDFSEDTYRTLTAVDCCLMVIDSSKGVEDRTRKLMEVTRLRDTPILTFMNKLDRDIRDPMELMDEVETELKIACSPVTWPIGCGKLFKGVYHILRDETYLYQTGQGHTIQNSRVIKGLDNPELDEAIGDDLAVQLRDELELVLGASHEFDHEAFLAGELTPVFFGTALGNFGVNHMLDGLVKWAPAPMPRQTDMREVTAAEETFTGFVFKIQANMDPKHRDRVAFLRVVSGMYDKGMKLHQVRTKKDVVISDALTFMAGDRSHVEHAYPGDIIGLHNHGTIQIGDTFTQGEMLKFTGIPNFAPELFRRIRLRDPLKQKQLLKGLVQLSEEGAVQVFRPLANNDLIVGAVGVLQFDVVVARLKGEYNVEAIYESVNVSTARWVECSNEKKLEEFKRKNEQHLALDGGDNLTYIAPTMVNLNLTRERYPDIEFHQTREH.

The 270-residue stretch at 11 to 280 folds into the tr-type G domain; it reads NKRRTFAIIS…GLVKWAPAPM (270 aa). GTP-binding positions include 20–27, 88–92, and 142–145; these read SHPDAGKT, DTPGH, and NKLD.

This sequence belongs to the TRAFAC class translation factor GTPase superfamily. Classic translation factor GTPase family. PrfC subfamily.

It is found in the cytoplasm. Its function is as follows. Increases the formation of ribosomal termination complexes and stimulates activities of RF-1 and RF-2. It binds guanine nucleotides and has strong preference for UGA stop codons. It may interact directly with the ribosome. The stimulation of RF-1 and RF-2 is significantly reduced by GTP and GDP, but not by GMP. This is Peptide chain release factor 3 from Proteus mirabilis (strain HI4320).